We begin with the raw amino-acid sequence, 101 residues long: NADH-quinone oxidoreductase subunit K (101 aa).

Helical transmembrane passes span 4 to 24, 30 to 50, and 61 to 81; these read LAHF…GIFL, IVLL…FVAF, and VFVF…LAIL.

This sequence belongs to the complex I subunit 4L family. In terms of assembly, NDH-1 is composed of 14 different subunits. Subunits NuoA, H, J, K, L, M, N constitute the membrane sector of the complex.

The protein localises to the cell inner membrane. The catalysed reaction is a quinone + NADH + 5 H(+)(in) = a quinol + NAD(+) + 4 H(+)(out). NDH-1 shuttles electrons from NADH, via FMN and iron-sulfur (Fe-S) centers, to quinones in the respiratory chain. The immediate electron acceptor for the enzyme in this species is believed to be ubiquinone. Couples the redox reaction to proton translocation (for every two electrons transferred, four hydrogen ions are translocated across the cytoplasmic membrane), and thus conserves the redox energy in a proton gradient. This chain is NADH-quinone oxidoreductase subunit K, found in Cupriavidus necator (strain ATCC 17699 / DSM 428 / KCTC 22496 / NCIMB 10442 / H16 / Stanier 337) (Ralstonia eutropha).